Here is a 609-residue protein sequence, read N- to C-terminus: Invertase (609 aa).

Positions 1–14 (MLKLLSLMVPLASA) are cleaved as a signal peptide. N23, N32, and N36 each carry an N-linked (GlcNAc...) asparagine glycan. Substrate is bound by residues 56–59 (WMND), Q77, and 119–120 (FS). Residue D59 is part of the active site. N128, N129, and N135 each carry an N-linked (GlcNAc...) asparagine glycan. 187 to 188 (RD) is a substrate binding site. N227 and N233 each carry an N-linked (GlcNAc...) asparagine glycan. E245 is a binding site for substrate. Residues N257, N267, N277, N284, N291, N298, N303, and N345 are each glycosylated (N-linked (GlcNAc...) asparagine). Substrate is bound at residue W389. N-linked (GlcNAc...) asparagine glycosylation is found at N409, N420, N440, N448, N452, N477, N545, and N566.

The protein belongs to the glycosyl hydrolase 32 family.

The enzyme catalyses Hydrolysis of terminal non-reducing beta-D-fructofuranoside residues in beta-D-fructofuranosides.. This chain is Invertase (INV1), found in Kluyveromyces lactis (strain ATCC 8585 / CBS 2359 / DSM 70799 / NBRC 1267 / NRRL Y-1140 / WM37) (Yeast).